The following is a 383-amino-acid chain: MTTRFSAFLSGTPCELDLHRFPATSDPNLQAWDAADEHLLKYLNESNTELAAKFLVINDSFGALTCALATARSDADIVFAADGRTAHLGCKANLASNGLASAKVDYQDCTNLGSFAKGRQILMKLPKNLNFLTDTLSQLSQTLAAGDVILMGAKAKHINQSLLALIAKAVGPATASLTWKKTRIITITADGNPRPVSKPSVWDVPEHGLKVTNLSNVFAASKLDIGARLMMANLPQGHFSSVIDLGCGNGVLALKAAQTYPDARLYLVDESAMAVESARQNWALNALDEGRAEFIWDDCLSHLPNEVQADLVLCNPPFHQGEAITDHIAWQMFNDAKRALKPGGLLHIVGNRHLGYHIKLKRLFGNCKTIASNGKFVILQAVK.

The protein belongs to the methyltransferase superfamily. RlmG family.

The protein localises to the cytoplasm. The catalysed reaction is guanosine(1835) in 23S rRNA + S-adenosyl-L-methionine = N(2)-methylguanosine(1835) in 23S rRNA + S-adenosyl-L-homocysteine + H(+). Functionally, specifically methylates the guanine in position 1835 (m2G1835) of 23S rRNA. This Shewanella amazonensis (strain ATCC BAA-1098 / SB2B) protein is Ribosomal RNA large subunit methyltransferase G.